A 251-amino-acid chain; its full sequence is Triosephosphate isomerase (251 aa).

9–11 contacts substrate; it reads NWK. The Electrophile role is filled by His-94. Glu-166 (proton acceptor) is an active-site residue. Substrate-binding positions include Gly-172, Ser-211, and 232 to 233; that span reads GG.

Belongs to the triosephosphate isomerase family. In terms of assembly, homodimer.

The protein resides in the cytoplasm. It catalyses the reaction D-glyceraldehyde 3-phosphate = dihydroxyacetone phosphate. Its pathway is carbohydrate biosynthesis; gluconeogenesis. It participates in carbohydrate degradation; glycolysis; D-glyceraldehyde 3-phosphate from glycerone phosphate: step 1/1. Functionally, involved in the gluconeogenesis. Catalyzes stereospecifically the conversion of dihydroxyacetone phosphate (DHAP) to D-glyceraldehyde-3-phosphate (G3P). This chain is Triosephosphate isomerase, found in Xanthomonas campestris pv. campestris (strain 8004).